Consider the following 369-residue polypeptide: Protein RecA (369 aa).

An ATP-binding site is contributed by 77 to 84; that stretch reads GPESSGKT.

The protein belongs to the RecA family.

The protein localises to the cytoplasm. Functionally, can catalyze the hydrolysis of ATP in the presence of single-stranded DNA, the ATP-dependent uptake of single-stranded DNA by duplex DNA, and the ATP-dependent hybridization of homologous single-stranded DNAs. It interacts with LexA causing its activation and leading to its autocatalytic cleavage. This is Protein RecA from Corynebacterium pseudotuberculosis (strain C231).